A 216-amino-acid chain; its full sequence is Methylthioribulose-1-phosphate dehydratase (216 aa).

Residues His101 and His103 each coordinate Zn(2+).

The protein belongs to the aldolase class II family. MtnB subfamily. Requires Zn(2+) as cofactor.

The enzyme catalyses 5-(methylsulfanyl)-D-ribulose 1-phosphate = 5-methylsulfanyl-2,3-dioxopentyl phosphate + H2O. It participates in amino-acid biosynthesis; L-methionine biosynthesis via salvage pathway; L-methionine from S-methyl-5-thio-alpha-D-ribose 1-phosphate: step 2/6. In terms of biological role, catalyzes the dehydration of methylthioribulose-1-phosphate (MTRu-1-P) into 2,3-diketo-5-methylthiopentyl-1-phosphate (DK-MTP-1-P). The protein is Methylthioribulose-1-phosphate dehydratase of Bradyrhizobium sp. (strain BTAi1 / ATCC BAA-1182).